Reading from the N-terminus, the 687-residue chain is FAD-dependent oxidoreductase domain-containing protein 2 (687 aa).

The first 22 residues, 1–22, serve as a signal peptide directing secretion; sequence MSVIQLVFRLLCVLDLLLAVSA. N-linked (GlcNAc...) asparagine glycans are attached at residues N29 and N305.

It belongs to the FOXRED2 family. FAD is required as a cofactor. Post-translationally, N-glycosylated.

Its subcellular location is the endoplasmic reticulum lumen. In terms of biological role, probable flavoprotein which may function in endoplasmic reticulum associated degradation (ERAD). May bind non-native proteins in the endoplasmic reticulum and target them to the ubiquitination machinery for subsequent degradation. In Danio rerio (Zebrafish), this protein is FAD-dependent oxidoreductase domain-containing protein 2 (foxred2).